The chain runs to 62 residues: Large ribosomal subunit protein uL29 (62 aa).

Belongs to the universal ribosomal protein uL29 family.

The protein is Large ribosomal subunit protein uL29 of Helicobacter hepaticus (strain ATCC 51449 / 3B1).